The sequence spans 396 residues: Elongation factor Tu (396 aa).

A tr-type G domain is found at 10–206; the sequence is KAHVNIGTIG…AVDEYIPDPV (197 aa). Positions 19 to 26 are G1; sequence GHVDHGKT. 19–26 is a binding site for GTP; it reads GHVDHGKT. Residue T26 coordinates Mg(2+). The interval 62–66 is G2; sequence GITIN. Residues 83–86 form a G3 region; the sequence is DAPG. GTP is bound by residues 83-87 and 138-141; these read DAPGH and NKSD. The interval 138 to 141 is G4; that stretch reads NKSD. The interval 176–178 is G5; the sequence is SAL.

This sequence belongs to the TRAFAC class translation factor GTPase superfamily. Classic translation factor GTPase family. EF-Tu/EF-1A subfamily. Monomer.

It localises to the cytoplasm. The enzyme catalyses GTP + H2O = GDP + phosphate + H(+). Functionally, GTP hydrolase that promotes the GTP-dependent binding of aminoacyl-tRNA to the A-site of ribosomes during protein biosynthesis. This is Elongation factor Tu from Micrococcus luteus (Micrococcus lysodeikticus).